A 424-amino-acid chain; its full sequence is Cytoplasmic tRNA 2-thiolation protein 2 (424 aa).

Positions 357–385 (PAAPETEEEEELSKKAHMEKSQEKTGDAD) are disordered. A compositionally biased stretch (basic and acidic residues) spans 368–385 (LSKKAHMEKSQEKTGDAD).

It belongs to the CTU2/NCS2 family.

It localises to the cytoplasm. It functions in the pathway tRNA modification; 5-methoxycarbonylmethyl-2-thiouridine-tRNA biosynthesis. In terms of biological role, plays a central role in 2-thiolation of mcm(5)S(2)U at tRNA wobble positions of tRNA(Lys), tRNA(Glu) and tRNA(Gln). May act by forming a heterodimer with NCS6 that ligates sulfur from thiocarboxylated URM1 onto the uridine of tRNAs at wobble position. Prior mcm(5) tRNA modification by the elongator complex is required for 2-thiolation. May also be involved in protein urmylation. The polypeptide is Cytoplasmic tRNA 2-thiolation protein 2 (Yarrowia lipolytica (strain CLIB 122 / E 150) (Yeast)).